Consider the following 76-residue polypeptide: Kappa-actitoxin-Avd4a (76 aa).

The first 19 residues, 1-19 (MNKALFLCLVVLCAAVVFA), serve as a signal peptide directing secretion. Residues 20-31 (AEDLQKAKHAPF) constitute a propeptide that is removed on maturation. Cystine bridges form between cysteine 37-cysteine 72, cysteine 39-cysteine 65, and cysteine 55-cysteine 73.

The protein belongs to the sea anemone type 3 (BDS) potassium channel toxin family. In terms of tissue distribution, highly expressed in the ectodermal tissue from the distal and proximal tentacles, body wall, and oral disk.

It localises to the secreted. The protein resides in the nematocyst. Functionally, acts as a gating modifier on both Kv and Nav ion channels, and also acts on blood pressure. Voltage-dependently inhibits voltage-gated potassium channels Kv3 (Kv3.1/KCNC1, Kv3.2/KCNC2 and Kv3.4/KCNC4) and slows inactivation of the voltage-gated sodium channel Nav1.7/SCN9A. Inhibits all Kv3.1, Kv3.2 and Kv3.4 by about 50% when tested at a voltage of +40 mV (45%, 48% and 56%, respectively). May act by binding residues in voltage-sensing domains S3b and S4 of Kv3. On sodium channels, tests have been done on human Nav1.7/SCN9A (expressed in HEK293 cells) (EC(50)=3 nM) and rat SCG neurons that mostly carry Nav1.7 channels (EC(50)=300 nM). This toxin also reduces blood pressure. The sequence is that of Kappa-actitoxin-Avd4a from Anemonia viridis (Snakelocks anemone).